A 742-amino-acid chain; its full sequence is RING finger protein 145 homolog (742 aa).

Transmembrane regions (helical) follow at residues 109-129 (AAII…TLPL), 138-158 (HFLS…YVDL), 178-198 (HGFH…LLEV), 233-253 (ACTG…PSLI), 285-305 (ILEL…YVEL), 318-338 (ILLT…ALAV), 368-388 (SGYT…FLGM), 395-415 (ILLA…LFEI), 438-458 (ICIA…MLAL), 463-483 (IYTA…IGVI), and 533-553 (VKVG…IVNI). Residues 592 to 630 (CAICFIEMKEEARITPCKHYFHGPCLRKWLAVKMVCPLC) form an RING-type; atypical zinc finger. 2 disordered regions span residues 642–684 (KSSS…PGDM) and 722–742 (AYES…ENNN). Over residues 659 to 672 (AAVEENPENPEEQP) the composition is skewed to acidic residues.

It is found in the membrane. Its subcellular location is the golgi apparatus. It localises to the cis-Golgi network. The protein resides in the trans-Golgi network. It catalyses the reaction S-ubiquitinyl-[E2 ubiquitin-conjugating enzyme]-L-cysteine + [acceptor protein]-L-lysine = [E2 ubiquitin-conjugating enzyme]-L-cysteine + N(6)-ubiquitinyl-[acceptor protein]-L-lysine.. E3 ubiquitin ligase that catalyzes the direct transfer of ubiquitin from E2 ubiquitin-conjugating enzyme to a specific substrate. Acting downstream of probable Golgi transport protein eas-1, involved in inhibition of activation of transcription factor sbp-1, thereby playing a role in regulating AMsh glial cell size. In Caenorhabditis elegans, this protein is RING finger protein 145 homolog.